The primary structure comprises 334 residues: L-lactate dehydrogenase A chain (334 aa).

NAD(+)-binding positions include Gly30 to Lys58 and Arg100. Substrate contacts are provided by Arg107, Asn139, and Arg170. Asn139 contributes to the NAD(+) binding site. The Proton acceptor role is filled by His194. Thr249 is a binding site for substrate.

The protein belongs to the LDH/MDH superfamily. LDH family. As to quaternary structure, homotetramer.

Its subcellular location is the cytoplasm. It catalyses the reaction (S)-lactate + NAD(+) = pyruvate + NADH + H(+). It functions in the pathway fermentation; pyruvate fermentation to lactate; (S)-lactate from pyruvate: step 1/1. Functionally, interconverts simultaneously and stereospecifically pyruvate and lactate with concomitant interconversion of NADH and NAD(+). The sequence is that of L-lactate dehydrogenase A chain (ldha) from Xenopus laevis (African clawed frog).